The sequence spans 768 residues: Ribonucleoside-diphosphate reductase large chain (768 aa).

Residues 7-8 (SK) and 13-19 (EKLGIDL) each bind ATP. T196 and S211 together coordinate GDP. A disulfide bridge links C212 with C437. DTTP is bound by residues 220-222 (DSI), K237, and R250. GDP is bound at residue N420. N420 functions as the Proton acceptor in the catalytic mechanism. The Cysteine radical intermediate role is filled by C422. E424 lines the GDP pocket. The Proton acceptor role is filled by E424.

This sequence belongs to the ribonucleoside diphosphate reductase large chain family. In terms of assembly, heterodimer of a large and a small subunit.

It carries out the reaction a 2'-deoxyribonucleoside 5'-diphosphate + [thioredoxin]-disulfide + H2O = a ribonucleoside 5'-diphosphate + [thioredoxin]-dithiol. Under complex allosteric control mediated by deoxynucleoside triphosphates and ATP binding to separate specificity and activation sites on the large subunit. The type of nucleotide bound at the specificity site determines substrate preference. It seems probable that ATP makes the enzyme reduce CDP and UDP, dGTP favors ADP reduction and dTTP favors GDP reduction. Stimulated by ATP and inhibited by dATP binding to the activity site. Its function is as follows. Provides the precursors necessary for DNA synthesis. Catalyzes the biosynthesis of deoxyribonucleotides from the corresponding ribonucleotides. The protein is Ribonucleoside-diphosphate reductase large chain of Encephalitozoon cuniculi (strain GB-M1) (Microsporidian parasite).